A 360-amino-acid chain; its full sequence is Probable butyrate kinase (360 aa).

Belongs to the acetokinase family.

The protein localises to the cytoplasm. It carries out the reaction butanoate + ATP = butanoyl phosphate + ADP. The polypeptide is Probable butyrate kinase (Enterococcus faecalis (strain ATCC 700802 / V583)).